Consider the following 508-residue polypeptide: Maturase K (508 aa).

Belongs to the intron maturase 2 family. MatK subfamily.

It localises to the plastid. It is found in the chloroplast. In terms of biological role, usually encoded in the trnK tRNA gene intron. Probably assists in splicing its own and other chloroplast group II introns. The sequence is that of Maturase K from Antirrhinum majus (Garden snapdragon).